The following is a 312-amino-acid chain: MTSIVVAALYKFVTLDDYVALREPLLQTLLDNGVKGTLLLAEEGINGTVSGSREGIDALFAWLRSDPRLADIEHKESYCDEQPFYRTKVKLKKEIVTLGVLGVDPNKQVGQYVEAKDWNALISDPEVLLIDTRNDYEVAIGTFEGAVDPKTRSFREFPEYIKAHYDPARHKKVAMFCTGGIRCEKASSYMLGAGFEEVFHLRGGILKYLEEVPQEQSLWRGDCFVFDNRVTVRHDLSEGEYDQCHACRNPVSLEDRQSEHYVPGISCPHCWDSLSEKTRAGARERQKQIELARQRNQPHPLGRDPRQSTLEN.

The Rhodanese domain maps to 123 to 217 (SDPEVLLIDT…YLEEVPQEQS (95 aa)). The Cysteine persulfide intermediate role is filled by Cys177. The segment covering 282–293 (ARERQKQIELAR) has biased composition (basic and acidic residues). Positions 282 to 312 (ARERQKQIELARQRNQPHPLGRDPRQSTLEN) are disordered.

The protein belongs to the TrhO family.

It catalyses the reaction uridine(34) in tRNA + AH2 + O2 = 5-hydroxyuridine(34) in tRNA + A + H2O. Its function is as follows. Catalyzes oxygen-dependent 5-hydroxyuridine (ho5U) modification at position 34 in tRNAs. This Pseudomonas aeruginosa (strain UCBPP-PA14) protein is tRNA uridine(34) hydroxylase.